The chain runs to 266 residues: tRNA pseudouridine synthase A (266 aa).

Residue D57 is the Nucleophile of the active site. Y115 is a binding site for substrate.

This sequence belongs to the tRNA pseudouridine synthase TruA family. Homodimer.

It catalyses the reaction uridine(38/39/40) in tRNA = pseudouridine(38/39/40) in tRNA. Functionally, formation of pseudouridine at positions 38, 39 and 40 in the anticodon stem and loop of transfer RNAs. In Buchnera aphidicola subsp. Acyrthosiphon pisum (strain APS) (Acyrthosiphon pisum symbiotic bacterium), this protein is tRNA pseudouridine synthase A.